Reading from the N-terminus, the 276-residue chain is Diaminopimelate epimerase (276 aa).

Substrate-binding residues include Asn13, Gln46, and Asn66. Cys75 serves as the catalytic Proton donor. Residues 76–77, Asn159, Asn192, and 210–211 each bind substrate; these read GN and ER. Catalysis depends on Cys219, which acts as the Proton acceptor. Substrate is bound at residue 220 to 221; the sequence is GS.

It belongs to the diaminopimelate epimerase family. In terms of assembly, homodimer.

It localises to the cytoplasm. It carries out the reaction (2S,6S)-2,6-diaminopimelate = meso-2,6-diaminopimelate. It participates in amino-acid biosynthesis; L-lysine biosynthesis via DAP pathway; DL-2,6-diaminopimelate from LL-2,6-diaminopimelate: step 1/1. Catalyzes the stereoinversion of LL-2,6-diaminopimelate (L,L-DAP) to meso-diaminopimelate (meso-DAP), a precursor of L-lysine and an essential component of the bacterial peptidoglycan. In Pseudoalteromonas atlantica (strain T6c / ATCC BAA-1087), this protein is Diaminopimelate epimerase.